The chain runs to 305 residues: N-acetylneuraminate lyase 2 (305 aa).

Aceneuramate-binding residues include S47 and T48. Y137 acts as the Proton donor in catalysis. The active-site Schiff-base intermediate with substrate is K165. 5 residues coordinate aceneuramate: T167, G189, D191, E192, and S208.

It belongs to the DapA family. NanA subfamily. As to quaternary structure, homotetramer.

It is found in the cytoplasm. It catalyses the reaction aceneuramate = aldehydo-N-acetyl-D-mannosamine + pyruvate. It functions in the pathway amino-sugar metabolism; N-acetylneuraminate degradation; D-fructose 6-phosphate from N-acetylneuraminate: step 1/5. Its function is as follows. Catalyzes the reversible aldol cleavage of N-acetylneuraminic acid (sialic acid; Neu5Ac) to form pyruvate and N-acetylmannosamine (ManNAc) via a Schiff base intermediate. The chain is N-acetylneuraminate lyase 2 from Escherichia coli O6:H1 (strain CFT073 / ATCC 700928 / UPEC).